The primary structure comprises 166 residues: Cytochrome c-550 2 (166 aa).

Positions 1–32 are cleaved as a signal peptide; sequence MFSRQFGRLATLALALAVAGCAGGEQSTTAEA. Heme c is bound by residues C71, C74, and H75.

It belongs to the cytochrome c family. PsbV subfamily. Heme c serves as cofactor.

The protein resides in the cell inner membrane. Probable low-potential cytochrome c, might function in photosystem II (PSII). This Gloeobacter violaceus (strain ATCC 29082 / PCC 7421) protein is Cytochrome c-550 2 (psbV2).